Consider the following 145-residue polypeptide: Superoxide dismutase [Mn/Fe] (145 aa).

Fe(3+) contacts are provided by histidine 10 and histidine 64. Residues histidine 10 and histidine 64 each contribute to the Mn(2+) site.

This sequence belongs to the iron/manganese superoxide dismutase family. It depends on Mn(2+) as a cofactor. Requires Fe(3+) as cofactor.

The catalysed reaction is 2 superoxide + 2 H(+) = H2O2 + O2. Functionally, destroys superoxide anion radicals which are normally produced within the cells and which are toxic to biological systems. Catalyzes the dismutation of superoxide anion radicals into O2 and H2O2 by successive reduction and oxidation of the transition metal ion at the active site. This chain is Superoxide dismutase [Mn/Fe] (sodA), found in Streptococcus porcinus.